Reading from the N-terminus, the 358-residue chain is MAASRTATRTLRALRTSTRPALTAAPRAAFRQGGRRLYSSEPAKSGGSNIWAWAIGAGALGAGGLWYLNQDGASATPKVFAPKFDDYQAVYNEIASRLEEKDDYDDGSYGPVLVRLAWHASGTYDKETGTGGSNGATMRFAPESDHGANAGLKAARDFLEPVKAKFPWITYSDLWILGGVCAIQEMLGPQIPYRPGRQDRDAAGCTPDGRLPDASQAQDHLRNIFYRMGFNDQEIVALSGAHALGRCHADRSGFDGPWTFSPTVLTNDYYKLLLDEKWQWKKWNGPKQYEDKKTKSLMMLPADMALIQDKKFKQWVEKYAADNELFFKDFSNVIVKLFELGVPFAENSERWVFKTVNA.

The N-terminal 38 residues, 1 to 38, are a transit peptide targeting the mitochondrion; sequence MAASRTATRTLRALRTSTRPALTAAPRAAFRQGGRRLY. His-119 serves as the catalytic Proton acceptor. The disordered stretch occupies residues 192–214; that stretch reads PYRPGRQDRDAAGCTPDGRLPDA. Residue His-242 participates in heme b binding. Trp-258 acts as the Tryptophan radical intermediate in catalysis.

It belongs to the peroxidase family. Cytochrome c peroxidase subfamily. In terms of assembly, forms a one-to-one complex with cytochrome c. It depends on heme b as a cofactor.

It localises to the mitochondrion matrix. Its subcellular location is the mitochondrion intermembrane space. It carries out the reaction 2 Fe(II)-[cytochrome c] + H2O2 + 2 H(+) = 2 Fe(III)-[cytochrome c] + 2 H2O. Destroys radicals which are normally produced within the cells and which are toxic to biological systems. This is Cytochrome c peroxidase, mitochondrial (ccp-1) from Neurospora crassa (strain ATCC 24698 / 74-OR23-1A / CBS 708.71 / DSM 1257 / FGSC 987).